The following is a 101-amino-acid chain: NAD(P)H-quinone oxidoreductase subunit 4L, chloroplastic (101 aa).

Transmembrane regions (helical) follow at residues 2–22 (MLEHVLILSAYLFSIGIYGLI), 27–46 (MVRALMCLELILNAVNMNLI), and 61–81 (IFSIFVIAIAAAEAAIGPAIV).

This sequence belongs to the complex I subunit 4L family. In terms of assembly, NDH is composed of at least 16 different subunits, 5 of which are encoded in the nucleus.

Its subcellular location is the plastid. The protein localises to the chloroplast thylakoid membrane. It carries out the reaction a plastoquinone + NADH + (n+1) H(+)(in) = a plastoquinol + NAD(+) + n H(+)(out). The enzyme catalyses a plastoquinone + NADPH + (n+1) H(+)(in) = a plastoquinol + NADP(+) + n H(+)(out). NDH shuttles electrons from NAD(P)H:plastoquinone, via FMN and iron-sulfur (Fe-S) centers, to quinones in the photosynthetic chain and possibly in a chloroplast respiratory chain. The immediate electron acceptor for the enzyme in this species is believed to be plastoquinone. Couples the redox reaction to proton translocation, and thus conserves the redox energy in a proton gradient. This Drimys granadensis protein is NAD(P)H-quinone oxidoreductase subunit 4L, chloroplastic.